Consider the following 282-residue polypeptide: ATP synthase gamma chain (282 aa).

Belongs to the ATPase gamma chain family. In terms of assembly, F-type ATPases have 2 components, CF(1) - the catalytic core - and CF(0) - the membrane proton channel. CF(1) has five subunits: alpha(3), beta(3), gamma(1), delta(1), epsilon(1). CF(0) has three main subunits: a, b and c.

The protein localises to the cell membrane. In terms of biological role, produces ATP from ADP in the presence of a proton gradient across the membrane. The gamma chain is believed to be important in regulating ATPase activity and the flow of protons through the CF(0) complex. The sequence is that of ATP synthase gamma chain from Clostridium botulinum (strain ATCC 19397 / Type A).